The primary structure comprises 293 residues: Elongation factor Ts (293 aa).

The segment at 79 to 82 (TDFV) is involved in Mg(2+) ion dislocation from EF-Tu.

It belongs to the EF-Ts family.

The protein resides in the cytoplasm. Functionally, associates with the EF-Tu.GDP complex and induces the exchange of GDP to GTP. It remains bound to the aminoacyl-tRNA.EF-Tu.GTP complex up to the GTP hydrolysis stage on the ribosome. In Bacillus licheniformis (strain ATCC 14580 / DSM 13 / JCM 2505 / CCUG 7422 / NBRC 12200 / NCIMB 9375 / NCTC 10341 / NRRL NRS-1264 / Gibson 46), this protein is Elongation factor Ts.